Here is a 540-residue protein sequence, read N- to C-terminus: Glucose-6-phosphate isomerase (540 aa).

The active-site Proton donor is the E350. Residues H381 and K503 contribute to the active site.

The protein belongs to the GPI family.

The protein localises to the cytoplasm. The catalysed reaction is alpha-D-glucose 6-phosphate = beta-D-fructose 6-phosphate. It participates in carbohydrate biosynthesis; gluconeogenesis. Its pathway is carbohydrate degradation; glycolysis; D-glyceraldehyde 3-phosphate and glycerone phosphate from D-glucose: step 2/4. In terms of biological role, catalyzes the reversible isomerization of glucose-6-phosphate to fructose-6-phosphate. This chain is Glucose-6-phosphate isomerase, found in Burkholderia orbicola (strain AU 1054).